Here is a 466-residue protein sequence, read N- to C-terminus: Asparagine--tRNA ligase (466 aa).

This sequence belongs to the class-II aminoacyl-tRNA synthetase family. As to quaternary structure, homodimer.

It is found in the cytoplasm. The catalysed reaction is tRNA(Asn) + L-asparagine + ATP = L-asparaginyl-tRNA(Asn) + AMP + diphosphate + H(+). This is Asparagine--tRNA ligase from Escherichia coli O157:H7.